Consider the following 265-residue polypeptide: tRNA pseudouridine synthase A (265 aa).

The active-site Nucleophile is D58. Residue Y116 participates in substrate binding.

It belongs to the tRNA pseudouridine synthase TruA family. In terms of assembly, homodimer.

It catalyses the reaction uridine(38/39/40) in tRNA = pseudouridine(38/39/40) in tRNA. Functionally, formation of pseudouridine at positions 38, 39 and 40 in the anticodon stem and loop of transfer RNAs. This Neisseria meningitidis serogroup C / serotype 2a (strain ATCC 700532 / DSM 15464 / FAM18) protein is tRNA pseudouridine synthase A.